The sequence spans 313 residues: D-alanine--D-alanine ligase (313 aa).

Residues Lys-114–Ser-309 form the ATP-grasp domain. Asp-142–Thr-195 contacts ATP. Mg(2+) is bound by residues Asp-263, Glu-276, and Asn-278.

It belongs to the D-alanine--D-alanine ligase family. Requires Mg(2+) as cofactor. It depends on Mn(2+) as a cofactor.

Its subcellular location is the cytoplasm. The catalysed reaction is 2 D-alanine + ATP = D-alanyl-D-alanine + ADP + phosphate + H(+). It functions in the pathway cell wall biogenesis; peptidoglycan biosynthesis. Functionally, cell wall formation. The protein is D-alanine--D-alanine ligase of Hydrogenovibrio crunogenus (strain DSM 25203 / XCL-2) (Thiomicrospira crunogena).